Consider the following 511-residue polypeptide: 2,3-bisphosphoglycerate-independent phosphoglycerate mutase (511 aa).

Mn(2+) is bound by residues aspartate 12 and serine 62. Serine 62 serves as the catalytic Phosphoserine intermediate. Substrate is bound by residues histidine 123, 152–153 (RD), arginine 184, arginine 190, 259–262 (RADR), and lysine 333. Mn(2+) is bound by residues aspartate 401, histidine 405, aspartate 442, histidine 443, and histidine 460.

Belongs to the BPG-independent phosphoglycerate mutase family. Monomer. It depends on Mn(2+) as a cofactor.

It carries out the reaction (2R)-2-phosphoglycerate = (2R)-3-phosphoglycerate. The protein operates within carbohydrate degradation; glycolysis; pyruvate from D-glyceraldehyde 3-phosphate: step 3/5. In terms of biological role, catalyzes the interconversion of 2-phosphoglycerate and 3-phosphoglycerate. The chain is 2,3-bisphosphoglycerate-independent phosphoglycerate mutase from Nitratidesulfovibrio vulgaris (strain ATCC 29579 / DSM 644 / CCUG 34227 / NCIMB 8303 / VKM B-1760 / Hildenborough) (Desulfovibrio vulgaris).